The chain runs to 516 residues: MTLLITGDSIVSAEAVWDHVTMANRELAFKAGDVIKVLDASNKDWWWGQIDDEEGWFPASFVRLWVNQEDEVEEGPSDVQNGHLDPNSDCLCLGRPLQNRDQMRANVINEIMSTERHYIKHLKDICEGYLKQCRKRRDMFSDEQLKVIFGNIEDIYRFQMGFVRDLEKQYNNDDPHLSEIGPCFLEHQDGFWIYSEYCNNHLDACMELSKLMKDSRYQHFFEACRLLQQMIDIAIDGFLLTPVQKICKYPLQLAELLKYTAQDHSDYRYVAAALAVMRNVTQQINERKRRLENIDKIAQWQASVLDWEGEDILDRSSELIYTGEMAWIYQPYGRNQQRVFFLFDHQMVLCKKDLIRRDILYYKGRIDMDKYEVVDIEDGRDDDFNVSMKNAFKLHNKETEEIHLFFAKKLEEKIRWLRAFREERKMVQEDEKIGFEISENQKRQAAMTVRKVPKQKGVNSARSVPPSYPPPQDPLNHGQYLVPDGIAQSQVFEFTEPKRSQSPFWQNFSRLTPFKK.

Residues 8 to 67 (DSIVSAEAVWDHVTMANRELAFKAGDVIKVLDASNKDWWWGQIDDEEGWFPASFVRLWVN) form the SH3 domain. The interval 100–110 (RDQMRANVINE) is interaction with GPHN. The DH domain maps to 103–287 (MRANVINEIM…RNVTQQINER (185 aa)). In terms of domain architecture, PH spans 318–425 (ELIYTGEMAW…WLRAFREERK (108 aa)). The segment at 453–480 (PKQKGVNSARSVPPSYPPPQDPLNHGQY) is disordered. S502 carries the phosphoserine modification.

In terms of assembly, interacts with GPHN. Detected in brain. Detected at low levels in heart.

Its subcellular location is the cytoplasm. The protein localises to the postsynaptic density. Acts as a guanine nucleotide exchange factor (GEF) for CDC42. Promotes formation of GPHN clusters. This is Rho guanine nucleotide exchange factor 9 (ARHGEF9) from Homo sapiens (Human).